The sequence spans 1057 residues: uncharacterized protein (1057 aa).

This sequence belongs to the IIV-6 261R/396L/443R family.

This is an uncharacterized protein from Acheta domesticus (House cricket).